Reading from the N-terminus, the 432-residue chain is Adenylosuccinate synthetase (432 aa).

GTP is bound by residues 12–18 (GDEGKGK) and 40–42 (GHT). The active-site Proton acceptor is the D13. Mg(2+) is bound by residues D13 and G40. IMP-binding positions include 13–16 (DEGK), 38–41 (NAGH), T132, R146, Q226, T241, and R305. H41 functions as the Proton donor in the catalytic mechanism. Substrate is bound at residue 301–307 (VVTGRKR). Residues R307, 333-335 (KLD), and 415-417 (STS) each bind GTP.

Belongs to the adenylosuccinate synthetase family. Homodimer. The cofactor is Mg(2+).

It is found in the cytoplasm. It catalyses the reaction IMP + L-aspartate + GTP = N(6)-(1,2-dicarboxyethyl)-AMP + GDP + phosphate + 2 H(+). Its pathway is purine metabolism; AMP biosynthesis via de novo pathway; AMP from IMP: step 1/2. Its function is as follows. Plays an important role in the de novo pathway of purine nucleotide biosynthesis. Catalyzes the first committed step in the biosynthesis of AMP from IMP. This Rhizobium johnstonii (strain DSM 114642 / LMG 32736 / 3841) (Rhizobium leguminosarum bv. viciae) protein is Adenylosuccinate synthetase.